Here is a 241-residue protein sequence, read N- to C-terminus: Glucosamine-6-phosphate deaminase (241 aa).

The active-site Proton acceptor; for enolization step is the Asp67. Asn136 functions as the For ring-opening step in the catalytic mechanism. The Proton acceptor; for ring-opening step role is filled by His138. Glu143 acts as the For ring-opening step in catalysis.

It belongs to the glucosamine/galactosamine-6-phosphate isomerase family. NagB subfamily.

It carries out the reaction alpha-D-glucosamine 6-phosphate + H2O = beta-D-fructose 6-phosphate + NH4(+). Its pathway is amino-sugar metabolism; N-acetylneuraminate degradation; D-fructose 6-phosphate from N-acetylneuraminate: step 5/5. Its function is as follows. Catalyzes the reversible isomerization-deamination of glucosamine 6-phosphate (GlcN6P) to form fructose 6-phosphate (Fru6P) and ammonium ion. The chain is Glucosamine-6-phosphate deaminase from Bacillus velezensis (strain DSM 23117 / BGSC 10A6 / LMG 26770 / FZB42) (Bacillus amyloliquefaciens subsp. plantarum).